Consider the following 392-residue polypeptide: ADP-ribosylhydrolase ARH1 (392 aa).

3 residues coordinate Mg(2+): serine 79, aspartate 80, and aspartate 81. A substrate-binding site is contributed by lysine 109. Residues 125-127 (IQT) are substrate. A substrate-binding site is contributed by glycine 159. Substrate regions lie at residues 192-194 (HNN), 309-311 (FSG), and 315-316 (SS). The Mg(2+) site is built by aspartate 348, aspartate 350, and serine 351.

This sequence belongs to the ADP-ribosylglycohydrolase family. In terms of assembly, monomer. It depends on Mg(2+) as a cofactor.

The catalysed reaction is N(omega)-(ADP-D-ribosyl)-L-arginyl-[protein] + H2O = ADP-D-ribose + L-arginyl-[protein]. Its function is as follows. Specifically acts as an arginine mono-ADP-ribosylhydrolase by mediating the removal of mono-ADP-ribose attached to arginine residues on proteins. In Dictyostelium discoideum (Social amoeba), this protein is ADP-ribosylhydrolase ARH1 (adprh).